We begin with the raw amino-acid sequence, 130 residues long: Large ribosomal subunit protein bL12 (130 aa).

Residues 94–114 (MTEGLPKTVKEKTSKSDAEDT) form a disordered region.

Belongs to the bacterial ribosomal protein bL12 family. In terms of assembly, homodimer. Part of the ribosomal stalk of the 50S ribosomal subunit. Forms a multimeric L10(L12)X complex, where L10 forms an elongated spine to which 2 to 4 L12 dimers bind in a sequential fashion. Binds GTP-bound translation factors.

Functionally, forms part of the ribosomal stalk which helps the ribosome interact with GTP-bound translation factors. Is thus essential for accurate translation. This chain is Large ribosomal subunit protein bL12, found in Chlamydia caviae (strain ATCC VR-813 / DSM 19441 / 03DC25 / GPIC) (Chlamydophila caviae).